Here is a 159-residue protein sequence, read N- to C-terminus: Ribosomal RNA large subunit methyltransferase H (159 aa).

S-adenosyl-L-methionine is bound by residues leucine 76, glycine 108, and 127–132 (FSKMTL).

The protein belongs to the RNA methyltransferase RlmH family. As to quaternary structure, homodimer.

The protein localises to the cytoplasm. It catalyses the reaction pseudouridine(1915) in 23S rRNA + S-adenosyl-L-methionine = N(3)-methylpseudouridine(1915) in 23S rRNA + S-adenosyl-L-homocysteine + H(+). In terms of biological role, specifically methylates the pseudouridine at position 1915 (m3Psi1915) in 23S rRNA. The sequence is that of Ribosomal RNA large subunit methyltransferase H from Bacillus cytotoxicus (strain DSM 22905 / CIP 110041 / 391-98 / NVH 391-98).